The sequence spans 105 residues: Met repressor (105 aa).

This sequence belongs to the MetJ family. As to quaternary structure, homodimer.

The protein localises to the cytoplasm. This regulatory protein, when combined with SAM (S-adenosylmethionine) represses the expression of the methionine regulon and of enzymes involved in SAM synthesis. In Hamiltonella defensa subsp. Acyrthosiphon pisum (strain 5AT), this protein is Met repressor.